The following is a 331-amino-acid chain: 6-phosphogluconolactonase (331 aa).

The protein belongs to the cycloisomerase 2 family.

The enzyme catalyses 6-phospho-D-glucono-1,5-lactone + H2O = 6-phospho-D-gluconate + H(+). It participates in carbohydrate degradation; pentose phosphate pathway; D-ribulose 5-phosphate from D-glucose 6-phosphate (oxidative stage): step 2/3. Catalyzes the hydrolysis of 6-phosphogluconolactone to 6-phosphogluconate. In Klebsiella pneumoniae (strain 342), this protein is 6-phosphogluconolactonase.